A 519-amino-acid chain; its full sequence is Chromobox protein homolog 2 (519 aa).

The 59-residue stretch at 12 to 70 folds into the Chromo domain; sequence FAAECILSKRLRKGKLEYLVKWRGWSSKHNSWEPEENILDPRLLLAFQKKEHEKEVQNR. Basic and acidic residues predominate over residues 60–69; that stretch reads KKEHEKEVQN. Residues 60–180 are disordered; the sequence is KKEHEKEVQN…PPEQKAARRP (121 aa). The segment covering 70–84 has biased composition (basic residues); it reads RKRGKRPRGRPRKHT. Residues 75-87 constitute a DNA-binding region (a.T hook); it reads RPRGRPRKHTVTS. Over residues 103 to 119 the composition is skewed to low complexity; that stretch reads KSKSSSSSSSSTSSSSS. A compositionally biased stretch (basic and acidic residues) spans 129–141; that stretch reads LDSKRGPRGRETH. Residues Lys-147 and Lys-154 each participate in a glycyl lysine isopeptide (Lys-Gly) (interchain with G-Cter in SUMO2) cross-link. Residues 164–169 carry the Nuclear localization signal motif; that stretch reads KRGRKP. Arg-248 is modified (asymmetric dimethylarginine; alternate). Residue Arg-248 is modified to Omega-N-methylarginine; alternate. Disordered regions lie at residues 295–336 and 367–464; these read QKGG…LAPT and AIPA…TSLP. At Ser-303 the chain carries Phosphoserine. Polar residues-rich tracts occupy residues 321 to 336 and 384 to 395; these read QRGN…LAPT and TGANMTNAPTDN. Over residues 453-464 the composition is skewed to low complexity; the sequence is SSDSDPDSTSLP.

In terms of assembly, component of a PRC1-like complex. The composition of the PRC1 complex may differ between the PRC1 complex in pluripotent embryonic stem cells containing RNF2, CBX7 and PCGF2, and the PRC1 complex in differentiating cells containing RNF2, CBX2, CBX4 and BMI1. Interacts with RING1/RNF2. Interacts (via chromodomain) with histone H3K9Me3 and H3K27me3. May interact with H3C15 and H3C1. Expressed in embryoid bodies.

The protein resides in the nucleus speckle. It is found in the chromosome. Functionally, component of a Polycomb group (PcG) multiprotein PRC1-like complex, a complex class required to maintain the transcriptionally repressive state of many genes, including Hox genes, throughout development. PcG PRC1 complex acts via chromatin remodeling and modification of histones; it mediates monoubiquitination of histone H2A 'Lys-119', rendering chromatin heritably changed in its expressibility. Binds to histone H3 trimethylated at 'Lys-9' (H3K9me3) or at 'Lys-27' (H3K27me3). Plays a role in the lineage differentiation of the germ layers in embryonic development. Involved in sexual development, acting as activator of NR5A1 expression. This is Chromobox protein homolog 2 (Cbx2) from Mus musculus (Mouse).